A 171-amino-acid chain; its full sequence is 3-hydroxydecanoyl-[acyl-carrier-protein] dehydratase (171 aa).

His70 is an active-site residue.

It belongs to the thioester dehydratase family. FabA subfamily. In terms of assembly, homodimer.

It localises to the cytoplasm. It carries out the reaction a (3R)-hydroxyacyl-[ACP] = a (2E)-enoyl-[ACP] + H2O. The enzyme catalyses (3R)-hydroxydecanoyl-[ACP] = (2E)-decenoyl-[ACP] + H2O. The catalysed reaction is (2E)-decenoyl-[ACP] = (3Z)-decenoyl-[ACP]. It participates in lipid metabolism; fatty acid biosynthesis. Necessary for the introduction of cis unsaturation into fatty acids. Catalyzes the dehydration of (3R)-3-hydroxydecanoyl-ACP to E-(2)-decenoyl-ACP and then its isomerization to Z-(3)-decenoyl-ACP. Can catalyze the dehydratase reaction for beta-hydroxyacyl-ACPs with saturated chain lengths up to 16:0, being most active on intermediate chain length. The sequence is that of 3-hydroxydecanoyl-[acyl-carrier-protein] dehydratase from Shewanella sediminis (strain HAW-EB3).